Here is a 64-residue protein sequence, read N- to C-terminus: YSLQNDPEITLIDSTIEWDEGYDVTARFLDYLNSLDAGFVAELENKTVEQLWSEYKASYGPNGQ.

A divalent metal cation serves as cofactor. Glycosylated.

Its activity is regulated as follows. Inhibited by EDTA. Functionally, metalloprotease, digests gelatin and azocasein (in vitro). This is Basic secretory protease from Boswellia serrata (Indian frankincense).